A 368-amino-acid chain; its full sequence is POU domain, class 3, transcription factor 1 (368 aa).

A compositionally biased stretch (polar residues) spans 1-16 (MATTAQYIPRNNSLPS). 4 disordered regions span residues 1 to 28 (MATTAQYIPRNNSLPSNPLMHPDSDRMH), 69 to 88 (TDWTSGTHIGQAEHNKASVQ), 100 to 134 (SHLVHQPTQNSHHGSWAPTTTHHLSPLSPASNGHQ), and 147 to 193 (SPQP…PSSD). Over residues 79–88 (QAEHNKASVQ) the composition is skewed to basic and acidic residues. Residues 105–134 (QPTQNSHHGSWAPTTTHHLSPLSPASNGHQ) are compositionally biased toward polar residues. The segment covering 155-170 (GLRDPLHDDAGSHDNQ) has biased composition (basic and acidic residues). The POU-specific domain maps to 187–261 (EDAPSSDDLE…LLNKWLEETD (75 aa)). The segment at residues 279 to 338 (KRKKRTSIEVGVKGALENHFLKCPKPSAHEITTLAGTLQLEKEVVRVWFCNRRQKEKRMT) is a DNA-binding region (homeobox).

Belongs to the POU transcription factor family. Class-3 subfamily. As to expression, predominantly expressed in the embryonic and adult central nervous system.

The protein resides in the nucleus. In terms of biological role, transcription factor that may play important roles in patterning the embryonic brain. Could directly respond to the reception of the sonic hedgehog (shh) signal. This Danio rerio (Zebrafish) protein is POU domain, class 3, transcription factor 1 (pou3f1).